The following is a 232-amino-acid chain: Lipoprotein-releasing system ATP-binding protein LolD (232 aa).

Positions 11-232 (IEVTDLQRAF…LHDGRLIEEY (222 aa)) constitute an ABC transporter domain. 47 to 54 (GPSGAGKS) is a binding site for ATP.

This sequence belongs to the ABC transporter superfamily. Lipoprotein translocase (TC 3.A.1.125) family. As to quaternary structure, the complex is composed of two ATP-binding proteins (LolD) and two transmembrane proteins (LolC and LolE).

Its subcellular location is the cell inner membrane. In terms of biological role, part of the ABC transporter complex LolCDE involved in the translocation of mature outer membrane-directed lipoproteins, from the inner membrane to the periplasmic chaperone, LolA. Responsible for the formation of the LolA-lipoprotein complex in an ATP-dependent manner. The protein is Lipoprotein-releasing system ATP-binding protein LolD of Zymomonas mobilis subsp. mobilis (strain ATCC 10988 / DSM 424 / LMG 404 / NCIMB 8938 / NRRL B-806 / ZM1).